Consider the following 315-residue polypeptide: Ribosomal protein L11 methyltransferase (315 aa).

The S-adenosyl-L-methionine site is built by Thr162, Gly183, Asp205, and Asn248.

It belongs to the methyltransferase superfamily. PrmA family.

The protein resides in the cytoplasm. It carries out the reaction L-lysyl-[protein] + 3 S-adenosyl-L-methionine = N(6),N(6),N(6)-trimethyl-L-lysyl-[protein] + 3 S-adenosyl-L-homocysteine + 3 H(+). In terms of biological role, methylates ribosomal protein L11. This chain is Ribosomal protein L11 methyltransferase, found in Oceanobacillus iheyensis (strain DSM 14371 / CIP 107618 / JCM 11309 / KCTC 3954 / HTE831).